The primary structure comprises 368 residues: Mitogen-activated protein kinase 7 (368 aa).

A Protein kinase domain is found at tyrosine 32–methionine 319. Residues isoleucine 38–valine 46 and lysine 61 each bind ATP. Aspartate 158 acts as the Proton acceptor in catalysis. Threonine 191 bears the Phosphothreonine mark. The short motif at threonine 191 to tyrosine 193 is the TXY element. A Phosphotyrosine modification is found at tyrosine 193. Phosphothreonine is present on threonine 196.

Belongs to the protein kinase superfamily. CMGC Ser/Thr protein kinase family. MAP kinase subfamily. Interacts with MKK3. Mg(2+) is required as a cofactor. In terms of processing, dually phosphorylated on Thr-191 and Tyr-193, which activates the enzyme.

It catalyses the reaction L-seryl-[protein] + ATP = O-phospho-L-seryl-[protein] + ADP + H(+). It carries out the reaction L-threonyl-[protein] + ATP = O-phospho-L-threonyl-[protein] + ADP + H(+). With respect to regulation, activated by threonine and tyrosine phosphorylation. Activated in response to hydrogen peroxide. Activation is triggered by MAPKKK17 and MAPKKK18 in a MKK3-dependent manner. In terms of biological role, MKK3-MPK7 module acts as a positive regulator of PR1 gene expression. This chain is Mitogen-activated protein kinase 7 (MPK7), found in Arabidopsis thaliana (Mouse-ear cress).